The chain runs to 205 residues: Golgi apparatus membrane protein TVP23 homolog B (205 aa).

At M1 the chain carries N-acetylmethionine. The disordered stretch occupies residues 1-21 (MLQQDSNDDTEDVSLFDAEEE). A run of 4 helical transmembrane segments spans residues 34–53 (PVAS…VYLL), 54–72 (CGLL…ILLL), 126–146 (IFWL…FSAL), and 152–172 (KWLA…YGYI).

It belongs to the TVP23 family.

Its subcellular location is the membrane. This chain is Golgi apparatus membrane protein TVP23 homolog B (TVP23B), found in Homo sapiens (Human).